The primary structure comprises 20 residues: Disintegrin (20 aa).

A Disintegrin domain is found at 1–20; it reads EAGEECDCGTPENPCCDAAT. Intrachain disulfides connect Cys6-Cys15 and Cys8-Cys16.

It belongs to the venom metalloproteinase (M12B) family. P-II subfamily. P-IIa sub-subfamily. As to quaternary structure, monomer. Expressed by the venom gland.

The protein resides in the secreted. Functionally, inhibits fibrinogen interaction with platelets. Acts by binding to alpha-IIb/beta-3 (ITGA2B/ITGB3) on the platelet surface and inhibits aggregation induced by ADP, thrombin, platelet-activating factor and collagen. The sequence is that of Disintegrin from Bothrops fonsecai (Fonseca's lancehead).